The sequence spans 1191 residues: Probable inositol polyphosphate 5-phosphatase C9G1.10c (1191 aa).

Polar residues-rich tracts occupy residues 1–10 (MASRQGFSNV), 72–101 (QVSSTIGSSTGRKVSGSIQRLASNFKNPSN), 114–135 (SDSSESHVATPSSPTISNSFVS), 151–161 (SFQSSVQSTKG), and 181–193 (NFSSKAGSSSPIS). The interval 1–193 (MASRQGFSNV…SKAGSSSPIS (193 aa)) is disordered. Residue Ser-195 is modified to Phosphoserine. 3 disordered regions span residues 205–281 (SQSP…PQPV), 294–334 (SQQL…DASL), and 355–425 (IPEK…SSSS). The span at 268-280 (TPPPIPSPRPPQP) shows a compositional bias: pro residues. The span at 302-311 (SPRKPPKPPL) shows a compositional bias: basic residues. Polar residues-rich tracts occupy residues 316–334 (TQRSSSPIENLATKSDASL), 367–382 (HTLSELSSPALTSENL), and 400–413 (LATNKPVSMPVSTE). Over residues 414-425 (QSDPSVAASSSS) the composition is skewed to low complexity.

This sequence belongs to the inositol 1,4,5-trisphosphate 5-phosphatase family.

The protein resides in the cytoplasm. This chain is Probable inositol polyphosphate 5-phosphatase C9G1.10c, found in Schizosaccharomyces pombe (strain 972 / ATCC 24843) (Fission yeast).